Reading from the N-terminus, the 391-residue chain is Adhesion defective protein 1 (391 aa).

A compositionally biased stretch (polar residues) spans 180–190 (SQSRPPQNQIQ). Disordered regions lie at residues 180–217 (SQSR…PDSP) and 366–391 (VEGE…RTKV). Over residues 201 to 211 (SESVNINSSSS) the composition is skewed to low complexity. The span at 370–383 (NPNNNPNFYSSDML) shows a compositional bias: polar residues.

This sequence belongs to the adn1/SEU family.

It localises to the nucleus. Its function is as follows. Probable transcriptional regulator involved in cell adhesion. The protein is Adhesion defective protein 1 (adn1) of Schizosaccharomyces pombe (strain 972 / ATCC 24843) (Fission yeast).